The sequence spans 27 residues: Delta-conotoxin SuVIA (27 aa).

Cystine bridges form between cysteine 1/cysteine 17, cysteine 8/cysteine 21, and cysteine 16/cysteine 25.

The protein belongs to the conotoxin O1 superfamily. In terms of tissue distribution, expressed by the venom duct, in the proximal part (indicative of a defensive role).

Its subcellular location is the secreted. Its function is as follows. This toxin activates voltage-gated sodium channels (Nav1.3/SCN3A (EC(50)=3.98 nM), Nav1.4/SCN4A (EC(50)=4.99 nM), Nav1.6/SCN8A (EC(50)=1.27 nM) and Nav1.7/SCN9A (EC(50)=2.42 nM)). It shifts the voltage-dependence of activation to more hyperpolarized potentials but has only little effect on channel inactivation. In vivo, it induces nocifensive or pain-like behaviors in mice when injected intraplantarly. This is coherent with the specific defensive role deduced from its proximal position in the venom gland. The sequence is that of Delta-conotoxin SuVIA from Conus suturatus (Sutured cone).